We begin with the raw amino-acid sequence, 685 residues long: Twinkle mtDNA helicase (685 aa).

The N-terminal 31 residues, 1-31 (MWLLLRRAYPLRILLPLRGEWVGRRGLPRSL), are a transit peptide targeting the mitochondrion. Residues 1 to 122 (MWLLLRRAYP…LCMTSLAEGS (122 aa)) are contributes to single strand DNA binding activity. Residues 54 to 214 (PVTTTEIRQY…LVFPWFTPGS (161 aa)) form an N-terminal region (NTR) region. Residues 122–373 (SWEDLQASVE…WHKSIVSFRQ (252 aa)) form a required for hexamers formation and DNA helicase activity region. Positions 215 to 335 (SGLRGLKLLG…LNPKRCSLVR (121 aa)) are primase-like domain. The SF4 helicase domain maps to 385–636 (VEQAAGVRWS…LTFSIPPKSK (252 aa)). A maybe required for stable oligomeric structure region spans residues 406-591 (HRKGELTVFT…QEADNVLILQ (186 aa)). 416–423 (GPTGSGKT) contacts ATP. Residues 454–482 (RVMLTQFAVTRLEEQLDKYEEWADRFEDL) adopt a coiled-coil conformation. Residues 641–685 (KIKDDNGLVAKKSSSGKKGAAHQNPEICLGQDPSPAQPDTSKSSG) form a might negatively regulate ATPase activity region. The segment at 642–685 (IKDDNGLVAKKSSSGKKGAAHQNPEICLGQDPSPAQPDTSKSSG) is disordered.

As to quaternary structure, homohexamer (via C-terminus), which assembles in a ring-like structure. Homoheptamer, which assembles in a ring-like structure. Homooctamer, which assembles in a ring-like structure. Oligomers may sequentially eject two monomers (octamer&gt;heptamer&gt;hexamer) upon DNA binding. Oligomerization is Mg(2+), nucleotide and DNA-independent, however, Mg(2+) and nucleotide stabilize the homohexameric form. Interacts with POLG in vitro. Interacts with LONP1. As to expression, ubiquitous with the highest levels in the liver, heart and kidneys. The skeletal muscle, brain and testis showed lower but detectable expression. Expression is coregulated with MRPL43.

It localises to the mitochondrion matrix. Its subcellular location is the mitochondrion nucleoid. The protein localises to the mitochondrion inner membrane. The catalysed reaction is ATP + H2O = ADP + phosphate + H(+). It catalyses the reaction Couples ATP hydrolysis with the unwinding of duplex DNA at the replication fork by translocating in the 5'-3' direction. This creates two antiparallel DNA single strands (ssDNA). The leading ssDNA polymer is the template for DNA polymerase III holoenzyme which synthesizes a continuous strand.. Functionally, mitochondrial helicase involved in mtDNA replication and repair. Might have a role in mtDNA repair. Has DNA strand separation activity needed to form a processive replication fork for leading strand synthesis which is catalyzed by the formation of a replisome complex with POLG and mtSDB. Preferentially unwinds DNA substrates with pre-existing 5'-and 3'- single-stranded tails but is also active on a 5'- flap substrate. Can dissociate the invading strand of immobile or mobile D-loop DNA structures irrespective of the single strand polarity of the third strand. In addition to its DNA strand separation activity, also has DNA strand annealing, DNA strand-exchange and DNA branch migration activities. The polypeptide is Twinkle mtDNA helicase (Mus musculus (Mouse)).